A 298-amino-acid polypeptide reads, in one-letter code: ATP phosphoribosyltransferase (298 aa).

It belongs to the ATP phosphoribosyltransferase family. Long subfamily. The cofactor is Mg(2+).

It localises to the cytoplasm. The catalysed reaction is 1-(5-phospho-beta-D-ribosyl)-ATP + diphosphate = 5-phospho-alpha-D-ribose 1-diphosphate + ATP. The protein operates within amino-acid biosynthesis; L-histidine biosynthesis; L-histidine from 5-phospho-alpha-D-ribose 1-diphosphate: step 1/9. Feedback inhibited by histidine. Functionally, catalyzes the condensation of ATP and 5-phosphoribose 1-diphosphate to form N'-(5'-phosphoribosyl)-ATP (PR-ATP). Has a crucial role in the pathway because the rate of histidine biosynthesis seems to be controlled primarily by regulation of HisG enzymatic activity. This is ATP phosphoribosyltransferase from Vibrio campbellii (strain ATCC BAA-1116).